The chain runs to 587 residues: Chaperonin CPN60, mitochondrial (587 aa).

A mitochondrion-targeting transit peptide spans 1-32 (MYRLISSIASKARVARNCTSQIGSRLSSTRNY).

This sequence belongs to the chaperonin (HSP60) family.

It localises to the mitochondrion. Implicated in mitochondrial protein import and macromolecular assembly. May facilitate the correct folding of imported proteins. May also prevent misfolding and promote the refolding and proper assembly of unfolded polypeptides generated under stress conditions in the mitochondrial matrix. The chain is Chaperonin CPN60, mitochondrial from Brassica napus (Rape).